The following is a 61-amino-acid chain: Small ribosomal subunit protein uS14 (61 aa).

4 residues coordinate Zn(2+): Cys-24, Cys-27, Cys-40, and Cys-43.

It belongs to the universal ribosomal protein uS14 family. Zinc-binding uS14 subfamily. Part of the 30S ribosomal subunit. Contacts proteins S3 and S10. Requires Zn(2+) as cofactor.

Functionally, binds 16S rRNA, required for the assembly of 30S particles and may also be responsible for determining the conformation of the 16S rRNA at the A site. The polypeptide is Small ribosomal subunit protein uS14 (Clostridium acetobutylicum (strain ATCC 824 / DSM 792 / JCM 1419 / IAM 19013 / LMG 5710 / NBRC 13948 / NRRL B-527 / VKM B-1787 / 2291 / W)).